A 207-amino-acid chain; its full sequence is Probable molybdenum cofactor guanylyltransferase (207 aa).

Residues 9 to 11 (LAG), Lys-21, and Asp-97 contribute to the GTP site. Asp-97 serves as a coordination point for Mg(2+).

The protein belongs to the MobA family. The cofactor is Mg(2+).

It localises to the cytoplasm. The catalysed reaction is Mo-molybdopterin + GTP + H(+) = Mo-molybdopterin guanine dinucleotide + diphosphate. Functionally, transfers a GMP moiety from GTP to Mo-molybdopterin (Mo-MPT) cofactor (Moco or molybdenum cofactor) to form Mo-molybdopterin guanine dinucleotide (Mo-MGD) cofactor. The polypeptide is Probable molybdenum cofactor guanylyltransferase (Trichormus variabilis (strain ATCC 29413 / PCC 7937) (Anabaena variabilis)).